Reading from the N-terminus, the 141-residue chain is MAKKGAGATRGITPVRPTRAIPVGAYLTVADNSGAKVIQVIGVVEYHGTRRRLASAGVGDMVVATVKKGRPDMRHQVVRAVIIRQRKEYRRLDGMRIKFEDNAAVIVTPEGVPRGTEIRGPVAREAAERWVRIGSIASIIV.

This sequence belongs to the universal ribosomal protein uL14 family. As to quaternary structure, part of the 50S ribosomal subunit. Forms a cluster with proteins L3 and L24e, part of which may contact the 16S rRNA in 2 intersubunit bridges.

In terms of biological role, binds to 23S rRNA. Forms part of two intersubunit bridges in the 70S ribosome. This Pyrococcus abyssi (strain GE5 / Orsay) protein is Large ribosomal subunit protein uL14.